The chain runs to 133 residues: Small ribosomal subunit protein eS8 (133 aa).

Residues 1 to 34 are disordered; the sequence is MGVWHGRSLRKPTGGRIRPHRKKRKFEMGNPPTE.

It belongs to the eukaryotic ribosomal protein eS8 family. As to quaternary structure, part of the 30S ribosomal subunit.

This Methanopyrus kandleri (strain AV19 / DSM 6324 / JCM 9639 / NBRC 100938) protein is Small ribosomal subunit protein eS8.